Here is a 184-residue protein sequence, read N- to C-terminus: Dual-action ribosomal maturation protein DarP (184 aa).

A disordered region spans residues methionine 1 to glutamine 27. Residues isoleucine 8–asparagine 18 are compositionally biased toward acidic residues.

Belongs to the DarP family.

It localises to the cytoplasm. Functionally, member of a network of 50S ribosomal subunit biogenesis factors which assembles along the 30S-50S interface, preventing incorrect 23S rRNA structures from forming. Promotes peptidyl transferase center (PTC) maturation. This is Dual-action ribosomal maturation protein DarP from Bordetella avium (strain 197N).